The chain runs to 212 residues: ATP-dependent Clp protease proteolytic subunit (212 aa).

Serine 112 acts as the Nucleophile in catalysis. The active site involves histidine 137.

It belongs to the peptidase S14 family. Fourteen ClpP subunits assemble into 2 heptameric rings which stack back to back to give a disk-like structure with a central cavity, resembling the structure of eukaryotic proteasomes.

Its subcellular location is the cytoplasm. It carries out the reaction Hydrolysis of proteins to small peptides in the presence of ATP and magnesium. alpha-casein is the usual test substrate. In the absence of ATP, only oligopeptides shorter than five residues are hydrolyzed (such as succinyl-Leu-Tyr-|-NHMec, and Leu-Tyr-Leu-|-Tyr-Trp, in which cleavage of the -Tyr-|-Leu- and -Tyr-|-Trp bonds also occurs).. Functionally, cleaves peptides in various proteins in a process that requires ATP hydrolysis. Has a chymotrypsin-like activity. Plays a major role in the degradation of misfolded proteins. This chain is ATP-dependent Clp protease proteolytic subunit, found in Thiobacillus denitrificans (strain ATCC 25259 / T1).